The sequence spans 287 residues: Ribonuclease Z (287 aa).

Residues H64, H66, D68, H69, H124, D191, and H250 each contribute to the Zn(2+) site. Catalysis depends on D68, which acts as the Proton acceptor.

The protein belongs to the RNase Z family. Homodimer. Zn(2+) is required as a cofactor.

It catalyses the reaction Endonucleolytic cleavage of RNA, removing extra 3' nucleotides from tRNA precursor, generating 3' termini of tRNAs. A 3'-hydroxy group is left at the tRNA terminus and a 5'-phosphoryl group is left at the trailer molecule.. Functionally, zinc phosphodiesterase, which displays some tRNA 3'-processing endonuclease activity. Probably involved in tRNA maturation, by removing a 3'-trailer from precursor tRNA. The sequence is that of Ribonuclease Z from Pyrobaculum arsenaticum (strain DSM 13514 / JCM 11321 / PZ6).